Here is a 340-residue protein sequence, read N- to C-terminus: MGKDYYQTLGLARGASDEEIKRAYRRQALRYHPDKNKEPGAEEKFKEIAEAYDVLSDPRKREIFDRYGEEGLKGSGPSGGSGGGANGTSFSYTFHGDPHAMFAEFFGGRNPFDTFFGQRNGEEGMDIDDPFSGFPMGMGGFTNVNFGRSRSAQEPARKKQDPPVTHDLRVSLEEIYSGCTKKMKISHKRLNPDGKSIRNEDKILTIEVKKGWKEGTKITFPKEGDQTSNNIPADIVFVLKDKPHNIFKRDGSDVIYPARISLREALCGCTVNVPTLDGRTIPVVFKDVIRPGMRRKVPGEGLPLPKTPEKRGDLIIEFEVIFPERIPQTSRTVLEQVLPI.

In terms of domain architecture, J spans 2–70 (GKDYYQTLGL…REIFDRYGEE (69 aa)). A Phosphothreonine modification is found at Thr-307.

As to quaternary structure, interacts with DNAJC3. Interacts with HSF1 (via transactivation domain); this interaction results in the inhibition of heat shock- and HSF1-induced transcriptional activity during the attenuation and recovery phase period of the heat shock response. Interacts with BAG3.

The protein localises to the cytoplasm. It localises to the nucleus. The protein resides in the nucleolus. In terms of biological role, interacts with HSP70 and can stimulate its ATPase activity. Stimulates the association between HSC70 and HIP. Negatively regulates heat shock-induced HSF1 transcriptional activity during the attenuation and recovery phase period of the heat shock response. Stimulates ATP hydrolysis and the folding of unfolded proteins mediated by HSPA1A/B (in vitro). The chain is DnaJ homolog subfamily B member 1 (DNAJB1) from Homo sapiens (Human).